Here is a 417-residue protein sequence, read N- to C-terminus: Tryptophan synthase beta chain (417 aa).

N6-(pyridoxal phosphate)lysine is present on Lys-99.

The protein belongs to the TrpB family. Tetramer of two alpha and two beta chains. Pyridoxal 5'-phosphate serves as cofactor.

It carries out the reaction (1S,2R)-1-C-(indol-3-yl)glycerol 3-phosphate + L-serine = D-glyceraldehyde 3-phosphate + L-tryptophan + H2O. It functions in the pathway amino-acid biosynthesis; L-tryptophan biosynthesis; L-tryptophan from chorismate: step 5/5. Functionally, the beta subunit is responsible for the synthesis of L-tryptophan from indole and L-serine. This chain is Tryptophan synthase beta chain (trpB), found in Corynebacterium glutamicum (strain ATCC 13032 / DSM 20300 / JCM 1318 / BCRC 11384 / CCUG 27702 / LMG 3730 / NBRC 12168 / NCIMB 10025 / NRRL B-2784 / 534).